The chain runs to 65 residues: MPKMKTHRASAKRFKKTANGGLKSASAYTSHRFHGKTKKQRRQLRGTRMMDSTTVKTYAKMLSNI.

2 stretches are compositionally biased toward basic residues: residues 1 to 16 (MPKMKTHRASAKRFKK) and 31 to 45 (HRFHGKTKKQRRQLR). Residues 1 to 47 (MPKMKTHRASAKRFKKTANGGLKSASAYTSHRFHGKTKKQRRQLRGT) form a disordered region.

The protein belongs to the bacterial ribosomal protein bL35 family.

In Leuconostoc citreum (strain KM20), this protein is Large ribosomal subunit protein bL35.